A 224-amino-acid chain; its full sequence is Imidazoleglycerol-phosphate dehydratase (224 aa).

Belongs to the imidazoleglycerol-phosphate dehydratase family.

The enzyme catalyses D-erythro-1-(imidazol-4-yl)glycerol 3-phosphate = 3-(imidazol-4-yl)-2-oxopropyl phosphate + H2O. The protein operates within amino-acid biosynthesis; L-histidine biosynthesis; L-histidine from 5-phospho-alpha-D-ribose 1-diphosphate: step 6/9. The protein is Imidazoleglycerol-phosphate dehydratase (HIS3) of Cyberlindnera jadinii (Torula yeast).